The sequence spans 859 residues: DNA-directed RNA polymerase subunit Rpo1C (859 aa).

The protein belongs to the RNA polymerase beta' chain family. Part of the RNA polymerase complex. In terms of processing, this protein undergoes a protein self splicing that involves a post-translational excision of the intervening region (intein) followed by peptide ligation.

The protein resides in the cytoplasm. The catalysed reaction is RNA(n) + a ribonucleoside 5'-triphosphate = RNA(n+1) + diphosphate. Functionally, DNA-dependent RNA polymerase (RNAP) catalyzes the transcription of DNA into RNA using the four ribonucleoside triphosphates as substrates. Forms part of the jaw domain. This Methanocaldococcus jannaschii (strain ATCC 43067 / DSM 2661 / JAL-1 / JCM 10045 / NBRC 100440) (Methanococcus jannaschii) protein is DNA-directed RNA polymerase subunit Rpo1C.